The chain runs to 574 residues: Sodium/hydrogen exchanger 8 (574 aa).

A run of 11 helical transmembrane segments spans residues 53–73 (MTIFFSLLVLAICIILVHLLI), 77–97 (LHFLPESVAVVSLGIIMGAFI), 116–136 (PNMFFLLLLPPIIFESGYSLH), 149–169 (LFSVFGTAISAFIVGGGIYFL), 184–204 (FAFGSLISAVDPVATIAIFNA), 254–274 (LGYFLKMFFGSAALGTLTGLI), 304–324 (GLAEGISLSGIMAILFSGIVM), 347–367 (VAFMCETCVFAFLGLSIFSFP), 373–393 (SFVIWCIVLVLFGRAVNIFPL), 410–430 (MFIMWFSGLRGAIPYALSLHL), and 444–464 (TTIIIVLFTVLLLGGGTMPLI).

Belongs to the monovalent cation:proton antiporter 1 (CPA1) transporter (TC 2.A.36) family.

The protein resides in the golgi apparatus membrane. In terms of biological role, involved in pH regulation to eliminate acids generated by active metabolism or to counter adverse environmental conditions. Major proton extruding system driven by the inward sodium ion chemical gradient. Plays an important role in signal transduction. The protein is Sodium/hydrogen exchanger 8 of Gallus gallus (Chicken).